Reading from the N-terminus, the 249-residue chain is NAD kinase (249 aa).

D45 serves as the catalytic Proton acceptor. NAD(+) is bound by residues 45 to 46, R50, 110 to 111, D138, and 149 to 154; these read DG, NE, and SGWGMS.

The protein belongs to the NAD kinase family. The cofactor is a divalent metal cation.

Its subcellular location is the cytoplasm. The catalysed reaction is NAD(+) + ATP = ADP + NADP(+) + H(+). In terms of biological role, involved in the regulation of the intracellular balance of NAD and NADP, and is a key enzyme in the biosynthesis of NADP. Catalyzes specifically the phosphorylation on 2'-hydroxyl of the adenosine moiety of NAD to yield NADP. The sequence is that of NAD kinase from Saccharolobus solfataricus (strain ATCC 35092 / DSM 1617 / JCM 11322 / P2) (Sulfolobus solfataricus).